Consider the following 228-residue polypeptide: Small ribosomal subunit protein uS2c (228 aa).

It belongs to the universal ribosomal protein uS2 family.

It localises to the plastid. The protein localises to the chloroplast. The polypeptide is Small ribosomal subunit protein uS2c (rps2) (Mesostigma viride (Green alga)).